The following is a 148-amino-acid chain: MRIVLQKVSSAQVSVGEKILGEIGVGFVLLVGIENTDGKEEVDYLARKISHLRVFADQNDKMNLSITDVKGSILSISQFTLYADTKKGNRPSFINAGDPEHAKTVYQAFNQALMNHNLKVATGEFGAHMEVKLENDGPVTIIFDTDHK.

Residues 137-138 (GP) carry the Gly-cisPro motif, important for rejection of L-amino acids motif.

It belongs to the DTD family. In terms of assembly, homodimer.

Its subcellular location is the cytoplasm. The enzyme catalyses glycyl-tRNA(Ala) + H2O = tRNA(Ala) + glycine + H(+). The catalysed reaction is a D-aminoacyl-tRNA + H2O = a tRNA + a D-alpha-amino acid + H(+). In terms of biological role, an aminoacyl-tRNA editing enzyme that deacylates mischarged D-aminoacyl-tRNAs. Also deacylates mischarged glycyl-tRNA(Ala), protecting cells against glycine mischarging by AlaRS. Acts via tRNA-based rather than protein-based catalysis; rejects L-amino acids rather than detecting D-amino acids in the active site. By recycling D-aminoacyl-tRNA to D-amino acids and free tRNA molecules, this enzyme counteracts the toxicity associated with the formation of D-aminoacyl-tRNA entities in vivo and helps enforce protein L-homochirality. The protein is D-aminoacyl-tRNA deacylase of Oenococcus oeni (strain ATCC BAA-331 / PSU-1).